The sequence spans 477 residues: Tail sheath protein (477 aa).

Belongs to the myoviridae tail sheath protein family. Homomultimer.

The protein resides in the virion. Its subcellular location is the host cytoplasm. Functionally, polymerizes as an extended structure around the baseplate-tail tube complex. During ejection, the sheath shifts to a contracted form, thereby making the inner tail tube protrude through the host cell envelope. This chain is Tail sheath protein, found in Burkholderia phage BcepMu (isolate -/United States/Summer/2002) (Bacteriophage BcepMu).